We begin with the raw amino-acid sequence, 346 residues long: NADH-quinone oxidoreductase subunit H (346 aa).

The next 8 membrane-spanning stretches (helical) occupy residues Ile6–Tyr26, Ile76–Val96, Ile128–Ala148, Ile166–Leu186, Leu198–Phe218, Ile260–Ile280, Leu289–Val309, and Leu324–Ile344.

Belongs to the complex I subunit 1 family. NDH-1 is composed of 14 different subunits. Subunits NuoA, H, J, K, L, M, N constitute the membrane sector of the complex.

The protein localises to the cell inner membrane. The catalysed reaction is a quinone + NADH + 5 H(+)(in) = a quinol + NAD(+) + 4 H(+)(out). In terms of biological role, NDH-1 shuttles electrons from NADH, via FMN and iron-sulfur (Fe-S) centers, to quinones in the respiratory chain. The immediate electron acceptor for the enzyme in this species is believed to be ubiquinone. Couples the redox reaction to proton translocation (for every two electrons transferred, four hydrogen ions are translocated across the cytoplasmic membrane), and thus conserves the redox energy in a proton gradient. This subunit may bind ubiquinone. The polypeptide is NADH-quinone oxidoreductase subunit H (Leptospira borgpetersenii serovar Hardjo-bovis (strain JB197)).